A 261-amino-acid polypeptide reads, in one-letter code: uncharacterized protein (261 aa).

Residues 1–22 (MRDSKRVVLYISIMVLSIFIIG) form the signal peptide. Cys23 carries N-palmitoyl cysteine lipidation. The S-diacylglycerol cysteine moiety is linked to residue Cys23.

Belongs to the staphylococcal tandem lipoprotein family.

It is found in the cell membrane. This is an uncharacterized protein from Staphylococcus aureus (strain N315).